Reading from the N-terminus, the 269-residue chain is Phosphate import ATP-binding protein PstB (269 aa).

The region spanning 23–264 is the ABC transporter domain; the sequence is IATRNLEFYY…PSKQQTEDYI (242 aa). 55 to 62 lines the ATP pocket; the sequence is GPSGCGKS.

This sequence belongs to the ABC transporter superfamily. Phosphate importer (TC 3.A.1.7) family. As to quaternary structure, the complex is composed of two ATP-binding proteins (PstB), two transmembrane proteins (PstC and PstA) and a solute-binding protein (PstS).

It localises to the cell inner membrane. The enzyme catalyses phosphate(out) + ATP + H2O = ADP + 2 phosphate(in) + H(+). Part of the ABC transporter complex PstSACB involved in phosphate import. Responsible for energy coupling to the transport system. The sequence is that of Phosphate import ATP-binding protein PstB from Xylella fastidiosa (strain Temecula1 / ATCC 700964).